Reading from the N-terminus, the 451-residue chain is MPREIITLQLGQCGNQIGFEFWKQLCAEHGISPEGIVEEFATEGTDRKDVFFYQADDEHYIPRAVLLDLEPRVIHSILNSPYAKLYNPENIYLSEHGGGAGNNWASGFSQGEKIHEDIFDIIDREADGSDSLEGFVLCHSIAGGTGSGLGSYLLERLNDRYPKKLVQTYSVFPNQDEMSDVVVQPYNSLLTLKRLTQNADCVVVLDNTALNRIATDRLHIQNPSFSQINQLVSTIMSASTTTLRYPGYMNNDLIGLIASLIPTPRLHFLMTGYTPLTTDQSVASVRKTTVLDVMRRLLQPKNVMVSTGRDRQTNHCYIAILNIIQGEVDPTQVHKSLQRIRERKLANFIPWGPASIQVALSRKSPYLPSAHRVSGLMMANHTSISSLFESSCQQYDKLRKREAFLEQFRKEDIFKDNFDELDRSREVVQELIDEYHAATRPDYISWGTQEQ.

The residue at position 131 (Ser-131) is a Phosphoserine; by BRSK1. Residue Ala-142–Gly-148 coordinates GTP.

The protein belongs to the tubulin family. Component of the gamma-tubulin ring complex (gTuRC) consisting of TUBGCP2, TUBGCP3, TUBGCP4, TUBGCP5 and TUBGCP6 and gamma-tubulin TUBG1 or TUBG2. TUBGCP2, TUBGCP3, TUBGCP4, TUBGCP5 and TUBGCP6 assemble in a 5:5:2:1:1 stoichiometry; each is associated with a gamma-tubulin, thereby arranging 14 gamma-tubulins in a helical manner. Gamma-tubulin at the first position is blocked by TUBGCP3 at the last position, allowing 13 protafilaments to grow into a microtubule. Interacts with alpha-beta tubulin heterodimers; the interaction allows microtubules to nucleate from the gTuRC. Post-translationally, phosphorylation at Ser-131 by BRSK1 regulates centrosome duplication, possibly by mediating relocation of gamma-tubulin and its associated proteins from the cytoplasm to the centrosome.

It is found in the cytoplasm. The protein localises to the cytoskeleton. The protein resides in the microtubule organizing center. Its subcellular location is the centrosome. In terms of biological role, tubulin is the major constituent of microtubules, protein filaments consisting of alpha- and beta-tubulin heterodimers. Gamma-tubulin is a key component of the gamma-tubulin ring complex (gTuRC) which mediates microtubule nucleation. The gTuRC regulates the minus-end nucleation of alpha-beta tubulin heterodimers that grow into microtubule protafilaments, a critical step in centrosome duplication and spindle formation. This chain is Tubulin gamma-2 chain (TUBG2), found in Bos taurus (Bovine).